Here is an 89-residue protein sequence, read N- to C-terminus: Small ribosomal subunit protein uS15 (89 aa).

The segment covering 1–11 (MSIAAERKAEV) has biased composition (basic and acidic residues). The interval 1 to 25 (MSIAAERKAEVIKTSANKPGDTGSP) is disordered.

The protein belongs to the universal ribosomal protein uS15 family. Part of the 30S ribosomal subunit. Forms a bridge to the 50S subunit in the 70S ribosome, contacting the 23S rRNA.

Its function is as follows. One of the primary rRNA binding proteins, it binds directly to 16S rRNA where it helps nucleate assembly of the platform of the 30S subunit by binding and bridging several RNA helices of the 16S rRNA. In terms of biological role, forms an intersubunit bridge (bridge B4) with the 23S rRNA of the 50S subunit in the ribosome. This Nitrobacter winogradskyi (strain ATCC 25391 / DSM 10237 / CIP 104748 / NCIMB 11846 / Nb-255) protein is Small ribosomal subunit protein uS15.